The sequence spans 144 residues: Transcriptional regulator MraZ (144 aa).

2 SpoVT-AbrB domains span residues 5–50 (TFNH…ALPQ) and 81–124 (AHEV…DRAA).

This sequence belongs to the MraZ family. As to quaternary structure, forms oligomers.

The protein resides in the cytoplasm. The protein localises to the nucleoid. This chain is Transcriptional regulator MraZ, found in Anaeromyxobacter dehalogenans (strain 2CP-C).